A 327-amino-acid chain; its full sequence is GTP 3',8-cyclase (327 aa).

Positions Ser-21 to Lys-233 constitute a Radical SAM core domain. A GTP-binding site is contributed by Arg-30. [4Fe-4S] cluster is bound by residues Cys-37 and Cys-41. Tyr-43 is an S-adenosyl-L-methionine binding site. Cys-44 lines the [4Fe-4S] cluster pocket. Residue Arg-79 participates in GTP binding. Gly-83 is a binding site for S-adenosyl-L-methionine. Thr-109 is a GTP binding site. Ser-133 is an S-adenosyl-L-methionine binding site. Lys-169 provides a ligand contact to GTP. An S-adenosyl-L-methionine-binding site is contributed by Met-203. Residues Cys-265 and Cys-268 each contribute to the [4Fe-4S] cluster site. Position 270-272 (Arg-270–Arg-272) interacts with GTP. Cys-282 lines the [4Fe-4S] cluster pocket.

Belongs to the radical SAM superfamily. MoaA family. Monomer and homodimer. The cofactor is [4Fe-4S] cluster.

The enzyme catalyses GTP + AH2 + S-adenosyl-L-methionine = (8S)-3',8-cyclo-7,8-dihydroguanosine 5'-triphosphate + 5'-deoxyadenosine + L-methionine + A + H(+). Its pathway is cofactor biosynthesis; molybdopterin biosynthesis. Its function is as follows. Catalyzes the cyclization of GTP to (8S)-3',8-cyclo-7,8-dihydroguanosine 5'-triphosphate. This chain is GTP 3',8-cyclase, found in Synechocystis sp. (strain ATCC 27184 / PCC 6803 / Kazusa).